The chain runs to 189 residues: MKTLAPSYLKHQFLIAMPHMADPNFAQTLTYIVEHNEHGAMGLVVNRPQELSLADILEQLRPDETPPASTLQVPIYQGGPVQTDRGFVLHSSECSFQASVALEGLSLTTSQDILLAIAAGVGPKQSLITLGYAGWEAGQLEAELADNAWLNCPFDPEIVFGMASDLRLEAAAASLGINLHLLTSQAGHA.

Belongs to the UPF0301 (AlgH) family.

This is UPF0301 protein PP_4995 from Pseudomonas putida (strain ATCC 47054 / DSM 6125 / CFBP 8728 / NCIMB 11950 / KT2440).